Reading from the N-terminus, the 298-residue chain is Probable phosphoserine phosphatase (298 aa).

Asp82 serves as the catalytic Nucleophile. Positions 82 and 84 each coordinate Mg(2+). Catalysis depends on Asp84, which acts as the Proton donor. Substrate is bound by residues Glu91, Arg127, Ser170 to Gly171, and Lys217. Asp240 lines the Mg(2+) pocket. Asn243 serves as a coordination point for substrate.

The protein belongs to the HAD-like hydrolase superfamily. SerB family. Mg(2+) is required as a cofactor.

It carries out the reaction O-phospho-L-serine + H2O = L-serine + phosphate. The catalysed reaction is O-phospho-D-serine + H2O = D-serine + phosphate. It participates in amino-acid biosynthesis; L-serine biosynthesis; L-serine from 3-phospho-D-glycerate: step 3/3. In Schizosaccharomyces pombe (strain 972 / ATCC 24843) (Fission yeast), this protein is Probable phosphoserine phosphatase.